Consider the following 197-residue polypeptide: MEKEGLGLEITELRLGLPGRDVAEKMMKKRAFTEMNMTSSGSNSDQCESGVVSSGGDAEKVNDSPAAKSQVVGWPPVCSYRKKNSCKEASTTKVGLGYVKVSMDGVPYLRKMDLGSSQGYDDLAFALDKLFGFRGIGVALKDGDNCEYVTIYEDKDGDWMLAGDVPWGMFLESCKRLRIMKRSDATGFGLQPRGVDE.

Positions 13–17 (LRLGL) match the EAR-like (transcriptional repression) motif. A compositionally biased stretch (polar residues) spans 35 to 47 (MNMTSSGSNSDQC). The tract at residues 35–67 (MNMTSSGSNSDQCESGVVSSGGDAEKVNDSPAA) is disordered. In terms of domain architecture, PB1 spans 96–184 (LGYVKVSMDG…KRLRIMKRSD (89 aa)).

The protein belongs to the Aux/IAA family. As to quaternary structure, homodimers and heterodimers. Interacts with the auxin response factor ARF7.

The protein resides in the nucleus. Functionally, aux/IAA proteins are short-lived transcriptional factors that function as repressors of early auxin response genes at low auxin concentrations. Repression is thought to result from the interaction with auxin response factors (ARFs), proteins that bind to the auxin-responsive promoter element (AuxRE). Formation of heterodimers with ARF proteins may alter their ability to modulate early auxin response genes expression. This Arabidopsis thaliana (Mouse-ear cress) protein is Auxin-responsive protein IAA19 (IAA19).